The chain runs to 352 residues: Glycerol-1-phosphate dehydrogenase [NAD(P)+] (352 aa).

Residues 98–102 (GKAID) and 120–123 (TAAS) contribute to the NAD(+) site. Asp-125 provides a ligand contact to substrate. Position 129 (Ser-129) interacts with NAD(+). Asp-172 provides a ligand contact to substrate. Zn(2+) is bound by residues Asp-172 and His-252. Residue His-256 coordinates substrate. Residue His-268 coordinates Zn(2+).

The protein belongs to the glycerol-1-phosphate dehydrogenase family. Requires Zn(2+) as cofactor.

Its subcellular location is the cytoplasm. The enzyme catalyses sn-glycerol 1-phosphate + NAD(+) = dihydroxyacetone phosphate + NADH + H(+). It carries out the reaction sn-glycerol 1-phosphate + NADP(+) = dihydroxyacetone phosphate + NADPH + H(+). It participates in membrane lipid metabolism; glycerophospholipid metabolism. Functionally, catalyzes the NAD(P)H-dependent reduction of dihydroxyacetonephosphate (DHAP or glycerone phosphate) to glycerol 1-phosphate (G1P). The G1P thus generated is used as the glycerophosphate backbone of phospholipids in the cellular membranes of Archaea. The protein is Glycerol-1-phosphate dehydrogenase [NAD(P)+] of Halobacterium salinarum (strain ATCC 29341 / DSM 671 / R1).